We begin with the raw amino-acid sequence, 179 residues long: Large ribosomal subunit protein uL5c (179 aa).

This sequence belongs to the universal ribosomal protein uL5 family. In terms of assembly, part of the 50S ribosomal subunit; contacts the 5S rRNA.

The protein resides in the plastid. Its subcellular location is the organellar chromatophore. Functionally, binds 5S rRNA, forms part of the central protuberance of the 50S subunit. This Paulinella chromatophora protein is Large ribosomal subunit protein uL5c (rpl5).